The sequence spans 232 residues: Sugar fermentation stimulation protein homolog (232 aa).

This sequence belongs to the SfsA family.

The polypeptide is Sugar fermentation stimulation protein homolog (Geobacter sulfurreducens (strain ATCC 51573 / DSM 12127 / PCA)).